We begin with the raw amino-acid sequence, 402 residues long: Elongation factor Tu (402 aa).

Residues 10-212 (KPHINIGTIG…AVDEYIPEPK (203 aa)) form the tr-type G domain. Residues 19–26 (GHVDHGKT) form a G1 region. Position 19 to 26 (19 to 26 (GHVDHGKT)) interacts with GTP. Residue Thr26 coordinates Mg(2+). The tract at residues 60–64 (GITIA) is G2. Residues 81–84 (DCPG) form a G3 region. GTP-binding positions include 81–85 (DCPGH) and 136–139 (NKED). The G4 stretch occupies residues 136–139 (NKED). The G5 stretch occupies residues 177–179 (SAF).

Belongs to the TRAFAC class translation factor GTPase superfamily. Classic translation factor GTPase family. EF-Tu/EF-1A subfamily. In terms of assembly, monomer.

It is found in the cytoplasm. It catalyses the reaction GTP + H2O = GDP + phosphate + H(+). Its function is as follows. GTP hydrolase that promotes the GTP-dependent binding of aminoacyl-tRNA to the A-site of ribosomes during protein biosynthesis. The sequence is that of Elongation factor Tu from Sulfurovum sp. (strain NBC37-1).